Consider the following 473-residue polypeptide: ATP synthase subunit beta (473 aa).

An ATP-binding site is contributed by 158-165; the sequence is GGAGVGKT.

The protein belongs to the ATPase alpha/beta chains family. In terms of assembly, F-type ATPases have 2 components, CF(1) - the catalytic core - and CF(0) - the membrane proton channel. CF(1) has five subunits: alpha(3), beta(3), gamma(1), delta(1), epsilon(1). CF(0) has three main subunits: a(1), b(2) and c(9-12). The alpha and beta chains form an alternating ring which encloses part of the gamma chain. CF(1) is attached to CF(0) by a central stalk formed by the gamma and epsilon chains, while a peripheral stalk is formed by the delta and b chains.

It localises to the cell membrane. It catalyses the reaction ATP + H2O + 4 H(+)(in) = ADP + phosphate + 5 H(+)(out). Its function is as follows. Produces ATP from ADP in the presence of a proton gradient across the membrane. The catalytic sites are hosted primarily by the beta subunits. In Geobacillus stearothermophilus (Bacillus stearothermophilus), this protein is ATP synthase subunit beta.